The sequence spans 827 residues: Glycerol-3-phosphate acyltransferase 1, mitochondrial (827 aa).

At methionine 1–glycine 87 the chain is on the cytoplasmic side. An important for mitochondrial localization region spans residues asparagine 80 to valine 120. Residues leucine 88–arginine 118 lie within the membrane without spanning it. Over aspartate 119–leucine 827 the chain is Cytoplasmic. The HXXXXD motif motif lies at histidine 230 to aspartate 235. 5 residues coordinate CoA: arginine 278, arginine 279, lysine 288, arginine 293, and arginine 328. A Phosphoserine modification is found at serine 380. Arginine 462 contributes to the CoA binding site. 2 positions are modified to phosphoserine: serine 687 and serine 694. Residues lysine 779 and lysine 783 each carry the N6-acetyllysine modification.

The protein belongs to the GPAT/DAPAT family. Highest levels in liver, intermediate levels in muscle and kidney, and lowest levels in lung and brain.

The protein localises to the mitochondrion outer membrane. It carries out the reaction sn-glycerol 3-phosphate + an acyl-CoA = a 1-acyl-sn-glycero-3-phosphate + CoA. It catalyses the reaction (9Z,12Z)-octadecadienoyl-CoA + sn-glycerol 3-phosphate = 1-(9Z,12Z)-octadecadienoyl-sn-glycero-3-phosphate + CoA. The enzyme catalyses sn-glycerol 3-phosphate + (9Z)-octadecenoyl-CoA = 1-(9Z-octadecenoyl)-sn-glycero-3-phosphate + CoA. The catalysed reaction is sn-glycerol 3-phosphate + octadecanoyl-CoA = 1-octadecanoyl-sn-glycero-3-phosphate + CoA. It carries out the reaction sn-glycerol 3-phosphate + hexadecanoyl-CoA = 1-hexadecanoyl-sn-glycero-3-phosphate + CoA. It catalyses the reaction dodecanoyl-CoA + sn-glycerol 3-phosphate = 1-dodecanoyl-sn-glycerol 3-phosphate + CoA. The enzyme catalyses 1-acyl-sn-glycero-3-phospho-(1'-sn-glycerol) + an acyl-CoA = a 1,2-diacyl-sn-glycero-3-phospho-(1'-sn-glycerol) + CoA. Its pathway is phospholipid metabolism; CDP-diacylglycerol biosynthesis; CDP-diacylglycerol from sn-glycerol 3-phosphate: step 1/3. Mitochondrial membrane protein that catalyzes the essential first step of biosynthesis of glycerolipids such as triglycerides, phosphatidic acids and lysophosphatidic acids. Esterifies acyl-group from acyl-coenzyme A (acyl-CoA) to the sn-1 position of glycerol-3-phosphate, to produce lysophosphatidic acid. Has a narrow hydrophobic binding cleft that selects for a linear acyl chain. Catalytic activity is higher for substrates with a 16-carbon acyl chain. This is Glycerol-3-phosphate acyltransferase 1, mitochondrial from Mus musculus (Mouse).